Consider the following 269-residue polypeptide: uncharacterized protein (269 aa).

Basic and acidic residues predominate over residues 181–191 (QKKELSPHEIA). The interval 181-203 (QKKELSPHEIAESPSSHSTSPMG) is disordered. The segment covering 193 to 202 (SPSSHSTSPM) has biased composition (polar residues). Ser-200 carries the phosphoserine modification.

This is an uncharacterized protein from Schizosaccharomyces pombe (strain 972 / ATCC 24843) (Fission yeast).